The primary structure comprises 560 residues: Dihydroxy-acid dehydratase (560 aa).

Cys50 contacts [2Fe-2S] cluster. Mg(2+) is bound at residue Asp82. Cys123 is a [2Fe-2S] cluster binding site. Residues Asp124 and Lys125 each coordinate Mg(2+). Lys125 is subject to N6-carboxylysine. Cys195 contacts [2Fe-2S] cluster. Mg(2+) is bound at residue Glu447. The active-site Proton acceptor is the Ser473.

The protein belongs to the IlvD/Edd family. As to quaternary structure, homodimer. [2Fe-2S] cluster is required as a cofactor. Requires Mg(2+) as cofactor.

It catalyses the reaction (2R)-2,3-dihydroxy-3-methylbutanoate = 3-methyl-2-oxobutanoate + H2O. The catalysed reaction is (2R,3R)-2,3-dihydroxy-3-methylpentanoate = (S)-3-methyl-2-oxopentanoate + H2O. The protein operates within amino-acid biosynthesis; L-isoleucine biosynthesis; L-isoleucine from 2-oxobutanoate: step 3/4. It functions in the pathway amino-acid biosynthesis; L-valine biosynthesis; L-valine from pyruvate: step 3/4. Functions in the biosynthesis of branched-chain amino acids. Catalyzes the dehydration of (2R,3R)-2,3-dihydroxy-3-methylpentanoate (2,3-dihydroxy-3-methylvalerate) into 2-oxo-3-methylpentanoate (2-oxo-3-methylvalerate) and of (2R)-2,3-dihydroxy-3-methylbutanoate (2,3-dihydroxyisovalerate) into 2-oxo-3-methylbutanoate (2-oxoisovalerate), the penultimate precursor to L-isoleucine and L-valine, respectively. This is Dihydroxy-acid dehydratase from Thermosynechococcus vestitus (strain NIES-2133 / IAM M-273 / BP-1).